The following is a 332-amino-acid chain: MKILVFGARDYEEPVIKKWSEEHKDVQVDIYPENMTEENVVKAKGYDGISIQQTNYIDNPYIYETLKDAGVKVIASRTAGVDMIHFDLVNENGLIVTNVPSYSPNAIAELAVTQAMNLLRKTPLVKKKVCEGDYRWIAELLGTEVRSITVGVIGTGKIGATSAKLFKGLGANVIAFDQYPNSDLNDILTYKDSLEDLLKEADLITLHTPLLEGTKHMINKDTLAIMKDGAYIVNTGRGGLINTGDLIEALESGKIRAAALDTFETEGLFLNKKMNPGELTDPEINKLLSMEQVIFTHHLGFFTSTAIENIVYSSLSSAVEVIKTGTATNRVN.

Active-site residues include Arg237 and Glu266. His298 (proton donor) is an active-site residue.

Belongs to the D-isomer specific 2-hydroxyacid dehydrogenase family. Monomer.

The catalysed reaction is a (2R)-2-hydroxycarboxylate + NAD(+) = a 2-oxocarboxylate + NADH + H(+). It catalyses the reaction (2R)-hydroxy-4-methylpentanoate + NAD(+) = 4-methyl-2-oxopentanoate + NADH + H(+). It participates in amino-acid degradation; L-leucine degradation. Its function is as follows. Involved in the reductive branch of L-leucine fermentation. Catalyzes the NADH-dependent reduction of 4-methyl-2-oxopentanoate (2-oxoisocaproate) to (R)-2-hydroxy-4-methylpentanoate ((R)-2-hydroxyisocaproate). For the reverse reaction, the enzyme accepts (R)- but not (S)-2-hydroxy-4-methylpentanoate. Can also use 2-oxopentanoate, 2-oxohexanoate and phenylpyruvate but not 2-oxoisovalerate and 2-oxobutyrate. Cannot use NADPH. The sequence is that of D-2-hydroxyacid dehydrogenase (NAD(+)) from Clostridioides difficile (Peptoclostridium difficile).